We begin with the raw amino-acid sequence, 290 residues long: MLREYKLVVVGGGGVGKSALTIQLIQSHFVDEYDPTIEDSYRKQCTIDDQQVLLDVLDTAGQEEYSAMREQYMRTGEGFLLVYSINSLNSFQELNSFYDQILRVKDSDNVPVLVVGNKCDLEMERQVSYEDGLALANSFNCPFLETSAKQRINVEEAFYGLVRNINQYNAKIAEAEKQQQQQQQQQNANQQGQDQYGQQKDNQQSQFNNQINNNNNTSAVNGGVSSDGIIDQNGNGGVSSGQANLPNQSQSQSQRQQQQQQQEPQQQSENQFSGQKQSSSKSKNGCCVIV.

11–18 (GGGGVGKS) is a binding site for GTP. Residues 33–41 (YDPTIEDSY) carry the Effector region motif. Residues 58-62 (DTAGQ) and 117-120 (NKCD) contribute to the GTP site. Positions 176-290 (EKQQQQQQQQ…KSKNGCCVIV (115 aa)) are disordered. 2 stretches are compositionally biased toward low complexity: residues 178–216 (QQQQ…NNNN) and 246–283 (PNQS…SKSK). Residue cysteine 286 is the site of S-palmitoyl cysteine attachment. Cysteine 287 carries the cysteine methyl ester modification. Cysteine 287 is lipidated: S-farnesyl cysteine. Residues 288–290 (VIV) constitute a propeptide, removed in mature form.

Belongs to the small GTPase superfamily. Ras family.

Its subcellular location is the cell membrane. With respect to regulation, alternates between an inactive form bound to GDP and an active form bound to GTP. Activated by a guanine nucleotide-exchange factor (GEF) and inactivated by a GTPase-activating protein (GAP). Its function is as follows. Required for the regulation of both a MAP kinase signaling pathway and a cAMP signaling pathway. The activation of these pathways contributes to the pathogenicity of the cells through the induction of the morphological transition from the yeast to the polarized filamentous form. This Candida albicans (strain SC5314 / ATCC MYA-2876) (Yeast) protein is Ras-like protein 1 (RAS1).